The sequence spans 285 residues: 2,3,4,5-tetrahydropyridine-2,6-dicarboxylate N-succinyltransferase (285 aa).

Residues Arg-111 and Asp-148 each coordinate substrate.

It belongs to the transferase hexapeptide repeat family. As to quaternary structure, homotrimer.

The protein localises to the cytoplasm. It carries out the reaction (S)-2,3,4,5-tetrahydrodipicolinate + succinyl-CoA + H2O = (S)-2-succinylamino-6-oxoheptanedioate + CoA. The protein operates within amino-acid biosynthesis; L-lysine biosynthesis via DAP pathway; LL-2,6-diaminopimelate from (S)-tetrahydrodipicolinate (succinylase route): step 1/3. The chain is 2,3,4,5-tetrahydropyridine-2,6-dicarboxylate N-succinyltransferase from Rhizobium rhizogenes (strain K84 / ATCC BAA-868) (Agrobacterium radiobacter).